Consider the following 454-residue polypeptide: Phosphoglucosamine mutase (454 aa).

Residue Ser101 is the Phosphoserine intermediate of the active site. Mg(2+) contacts are provided by Ser101, Asp243, Asp245, and Asp247. Ser101 bears the Phosphoserine mark.

It belongs to the phosphohexose mutase family. Requires Mg(2+) as cofactor. In terms of processing, activated by phosphorylation.

The enzyme catalyses alpha-D-glucosamine 1-phosphate = D-glucosamine 6-phosphate. In terms of biological role, catalyzes the conversion of glucosamine-6-phosphate to glucosamine-1-phosphate. This is Phosphoglucosamine mutase from Citrifermentans bemidjiense (strain ATCC BAA-1014 / DSM 16622 / JCM 12645 / Bem) (Geobacter bemidjiensis).